Here is a 349-residue protein sequence, read N- to C-terminus: Twinfilin-2 (349 aa).

A2 is modified (N-acetylalanine). ADF-H domains lie at 4-139 (QTGI…KHLS) and 177-313 (GLAF…DEVH). K14 carries the post-translational modification N6-acetyllysine. At Y309 the chain carries Phosphotyrosine. Positions 322-349 (AFAKPKGPGGKRGHKRLIRGPGENGEDS) are disordered. The segment covering 330 to 339 (GGKRGHKRLI) has biased composition (basic residues). The residue at position 349 (S349) is a Phosphoserine.

It belongs to the actin-binding proteins ADF family. Twinfilin subfamily. As to quaternary structure, interacts with G-actin; ADP-actin form and capping protein (CP). Isoform 2 interacts (via its N-terminal ADF-H domain) with G-actin (ADP-bound form) with significantly higher affinity than isoform 1. May also be able to interact with TWF1 and phosphoinositides, PI(4,5)P2. When bound to PI(4,5)P2, it is down-regulated. Interacts with MYO7A. Phosphorylated on both serine/threonine and tyrosine. Isoform 1 is ubiquitously expressed (at protein level). Isoform 2 expression is restricted to heart and skeletal muscle where it is the predominant form.

It localises to the cytoplasm. It is found in the cytoskeleton. The protein resides in the perinuclear region. The protein localises to the cell projection. Its subcellular location is the stereocilium. In terms of biological role, actin-binding protein involved in motile and morphological processes. Inhibits actin polymerization, likely by sequestering G-actin. By capping the barbed ends of filaments, it also regulates motility. Seems to play an important role in clathrin-mediated endocytosis and distribution of endocytic organelles. May play a role in regulating the mature length of the middle and short rows of stereocilia. This Mus musculus (Mouse) protein is Twinfilin-2 (Twf2).